Reading from the N-terminus, the 361-residue chain is Phosphoribosylformylglycinamidine cyclo-ligase (361 aa).

The protein belongs to the AIR synthase family.

The protein resides in the cytoplasm. It catalyses the reaction 2-formamido-N(1)-(5-O-phospho-beta-D-ribosyl)acetamidine + ATP = 5-amino-1-(5-phospho-beta-D-ribosyl)imidazole + ADP + phosphate + H(+). The protein operates within purine metabolism; IMP biosynthesis via de novo pathway; 5-amino-1-(5-phospho-D-ribosyl)imidazole from N(2)-formyl-N(1)-(5-phospho-D-ribosyl)glycinamide: step 2/2. This is Phosphoribosylformylglycinamidine cyclo-ligase from Bartonella quintana (strain Toulouse) (Rochalimaea quintana).